Reading from the N-terminus, the 172-residue chain is Adenine phosphoribosyltransferase (172 aa).

The protein belongs to the purine/pyrimidine phosphoribosyltransferase family. In terms of assembly, homodimer.

It localises to the cytoplasm. The catalysed reaction is AMP + diphosphate = 5-phospho-alpha-D-ribose 1-diphosphate + adenine. It functions in the pathway purine metabolism; AMP biosynthesis via salvage pathway; AMP from adenine: step 1/1. Its function is as follows. Catalyzes a salvage reaction resulting in the formation of AMP, that is energically less costly than de novo synthesis. The sequence is that of Adenine phosphoribosyltransferase from Staphylococcus haemolyticus (strain JCSC1435).